We begin with the raw amino-acid sequence, 30 residues long: Kappa-sparatoxin-Hv1d (30 aa).

Disulfide bonds link cysteine 3–cysteine 17, cysteine 10–cysteine 22, and cysteine 16–cysteine 26.

Expressed by the venom gland.

The protein localises to the secreted. Functionally, inhibitor of voltage-gated potassium channels of the Kv4/KCND family. Blocks calcium channels (Cav). This is Kappa-sparatoxin-Hv1d from Heteropoda venatoria (Brown huntsman spider).